A 214-amino-acid chain; its full sequence is C-type lectin domain family 2 member L (214 aa).

Residues 1–56 (MEPAREPPSRARPPPPLAARPAPAPAAPRPRSPAEAEARGPEGLLRRSGSGYEGST) form a disordered region. Over residues 10 to 31 (RARPPPPLAARPAPAPAAPRPR) the composition is skewed to pro residues. Ser-32 carries the phosphoserine modification. A helical transmembrane segment spans residues 69 to 89 (LLLGAIAVLLFAILVVMSILA). The C-type lectin domain maps to 107-209 (YGRKCYFFSE…CLMTRPWVCS (103 aa)). 2 cysteine pairs are disulfide-bonded: Cys-128/Cys-208 and Cys-187/Cys-200.

It is found in the membrane. The sequence is that of C-type lectin domain family 2 member L (CLEC2L) from Homo sapiens (Human).